A 356-amino-acid polypeptide reads, in one-letter code: Protein RecA (356 aa).

An ATP-binding site is contributed by 77–84 (GPESSGKT).

It belongs to the RecA family.

The protein resides in the cytoplasm. Its function is as follows. Can catalyze the hydrolysis of ATP in the presence of single-stranded DNA, the ATP-dependent uptake of single-stranded DNA by duplex DNA, and the ATP-dependent hybridization of homologous single-stranded DNAs. It interacts with LexA causing its activation and leading to its autocatalytic cleavage. The chain is Protein RecA from Caulobacter vibrioides (strain ATCC 19089 / CIP 103742 / CB 15) (Caulobacter crescentus).